The chain runs to 183 residues: Large ribosomal subunit protein uL6 (183 aa).

It belongs to the universal ribosomal protein uL6 family. In terms of assembly, part of the 50S ribosomal subunit.

This protein binds to the 23S rRNA, and is important in its secondary structure. It is located near the subunit interface in the base of the L7/L12 stalk, and near the tRNA binding site of the peptidyltransferase center. This chain is Large ribosomal subunit protein uL6, found in Chlamydia trachomatis serovar A (strain ATCC VR-571B / DSM 19440 / HAR-13).